A 513-amino-acid chain; its full sequence is Probable DNA ligase (513 aa).

Residue glutamate 213 coordinates ATP. Lysine 215 serves as the catalytic N6-AMP-lysine intermediate. Residues arginine 220, arginine 235, glutamate 264, phenylalanine 304, arginine 376, and lysine 382 each coordinate ATP.

This sequence belongs to the ATP-dependent DNA ligase family. Mg(2+) is required as a cofactor.

It catalyses the reaction ATP + (deoxyribonucleotide)n-3'-hydroxyl + 5'-phospho-(deoxyribonucleotide)m = (deoxyribonucleotide)n+m + AMP + diphosphate.. Its function is as follows. DNA ligase that seals nicks in double-stranded DNA during DNA replication, DNA recombination and DNA repair. This chain is Probable DNA ligase, found in Anaeromyxobacter dehalogenans (strain 2CP-C).